The primary structure comprises 276 residues: MLMITSFANPRVAQAFVDYMATQGVILTIQQHNQSDVWLADESQAERVRAELARFLENPADPRYLAASWQAGHTGSGLHYRRYPFFAALRERAGPVTWVMMIACVVVFIAMQILGDQEVMLWLAWPFDPTLKFEFWRYFTHALMHFSLMHILFNLLWWWYLGGAVEKRLGSGKLIVITLISALLSGYVQQKFSGPWFGGLSGVVYALMGYVWLRGERDPQSGIYLQRGLIIFALIWIVAGWFDLFGMSMANGAHIAGLAVGLAMAFVDSLNARKRK.

Helical transmembrane passes span 94 to 114, 142 to 162, 169 to 189, 192 to 212, 229 to 249, and 250 to 270; these read GPVT…MQIL, ALMH…WYLG, LGSG…GYVQ, FSGP…GYVW, LIIF…GMSM, and ANGA…VDSL. Residue S201 is the Nucleophile of the active site. The active site involves H254.

This sequence belongs to the peptidase S54 family.

The protein localises to the cell inner membrane. The catalysed reaction is Cleaves type-1 transmembrane domains using a catalytic dyad composed of serine and histidine that are contributed by different transmembrane domains.. In terms of biological role, rhomboid-type serine protease that catalyzes intramembrane proteolysis. This is Rhomboid protease GlpG from Escherichia coli O45:K1 (strain S88 / ExPEC).